The primary structure comprises 161 residues: Regulator of ribonuclease activity A (161 aa).

This sequence belongs to the RraA family. Homotrimer. Binds to both RNA-binding sites in the C-terminal region of Rne and to RhlB.

Its subcellular location is the cytoplasm. In terms of biological role, globally modulates RNA abundance by binding to RNase E (Rne) and regulating its endonucleolytic activity. Can modulate Rne action in a substrate-dependent manner by altering the composition of the degradosome. Modulates RNA-binding and helicase activities of the degradosome. The polypeptide is Regulator of ribonuclease activity A (Shewanella denitrificans (strain OS217 / ATCC BAA-1090 / DSM 15013)).